The sequence spans 327 residues: Phosphoenolpyruvate transferase (327 aa).

7,8-didemethyl-8-hydroxy-5-deazariboflavin is bound at residue aspartate 59.

This sequence belongs to the CofD family. As to quaternary structure, homodimer. Mg(2+) is required as a cofactor.

The enzyme catalyses enolpyruvoyl-2-diphospho-5'-guanosine + 7,8-didemethyl-8-hydroxy-5-deazariboflavin = dehydro coenzyme F420-0 + GMP + H(+). The protein operates within cofactor biosynthesis; coenzyme F420 biosynthesis. Functionally, catalyzes the transfer of the phosphoenolpyruvate moiety from enoylpyruvoyl-2-diphospho-5'-guanosine (EPPG) to 7,8-didemethyl-8-hydroxy-5-deazariboflavin (FO) with the formation of dehydro coenzyme F420-0 and GMP. This is Phosphoenolpyruvate transferase from Mycolicibacterium smegmatis (strain ATCC 700084 / mc(2)155) (Mycobacterium smegmatis).